An 85-amino-acid polypeptide reads, in one-letter code: Phosphocarrier protein HPr (85 aa).

The region spanning 1-85 (MYSKDVEIIA…HLVALIPTLE (85 aa)) is the HPr domain. H15 functions as the Pros-phosphohistidine intermediate in the catalytic mechanism.

It belongs to the HPr family.

It localises to the cytoplasm. General (non sugar-specific) component of the phosphoenolpyruvate-dependent sugar phosphotransferase system (sugar PTS). This major carbohydrate active-transport system catalyzes the phosphorylation of incoming sugar substrates concomitantly with their translocation across the cell membrane. The phosphoryl group from phosphoenolpyruvate (PEP) is transferred to the phosphoryl carrier protein HPr by enzyme I. Phospho-HPr then transfers it to the PTS EIIA domain. This is Phosphocarrier protein HPr (ptsH) from Haemophilus influenzae (strain ATCC 51907 / DSM 11121 / KW20 / Rd).